Here is a 357-residue protein sequence, read N- to C-terminus: Hypersensitivity response secretion protein HrcU (357 aa).

Residues 1 to 21 (MSDEKTEQPTDKKLEDAHRDG) are disordered. Transmembrane regions (helical) follow at residues 29–49 (LTAAAVLLSGCLLLALTASVF), 84–104 (LVLMTLPVGFVFALVAWIATW), 149–169 (VAVAAAVWKLILILMPSIVGA), 180–200 (IGMTLLVRLLAAGGGLFLILG), and 323–343 (LYGPVPEPLFETVAEVLAWVG).

This sequence belongs to the type III secretion exporter family.

The protein resides in the cell membrane. Functionally, involved in the secretion of PopA, a proteinaceous elicitor of the hypersensitivity response in plants. This is Hypersensitivity response secretion protein HrcU (hrcU) from Ralstonia nicotianae (strain ATCC BAA-1114 / GMI1000) (Ralstonia solanacearum).